The following is a 638-amino-acid chain: Growth hormone receptor (638 aa).

Positions 1–18 (MDLWQLLLTLALAGSSDA) are cleaved as a signal peptide. Residues 19–264 (FSGSEPTAAI…NQFTCEEDFY (246 aa)) are Extracellular-facing. Asparagine 46 is a glycosylation site (N-linked (GlcNAc...) asparagine). 2 disulfides stabilise this stretch: cysteine 56–cysteine 66 and cysteine 101–cysteine 112. A glycan (N-linked (GlcNAc...) asparagine) is linked at asparagine 115. Cysteine 126 and cysteine 140 are oxidised to a cystine. Residues 151–254 (PPIALNWTLL…EVLYVTLPQM (104 aa)) enclose the Fibronectin type-III domain. Residues asparagine 156, asparagine 161, and asparagine 200 are each glycosylated (N-linked (GlcNAc...) asparagine). The WSXWS motif motif lies at 240 to 244 (YGEFS). A helical membrane pass occupies residues 265–288 (FPWLLIIIFGIFGLTVMLFVFLFS). Over 289 to 638 (KQQRIKMLIL…STDQLNKIMP (350 aa)) the chain is Cytoplasmic. The segment at 294–379 (KMLILPPVPV…HQKSHSNLGV (86 aa)) is required for JAK2 binding. Positions 297–305 (ILPPVPVPK) match the Box 1 motif motif. A UbE motif motif is present at residues 340–349 (DSWVEFIELD). At serine 341 the chain carries Phosphoserine. A disordered region spans residues 353–388 (PDEKNEGSDTDRLLSSDHQKSHSNLGVKDGDSGRTS). Residues 356 to 372 (KNEGSDTDRLLSSDHQK) are compositionally biased toward basic and acidic residues. Tyrosine 487 and tyrosine 595 each carry phosphotyrosine.

Belongs to the type I cytokine receptor family. Type 1 subfamily. On growth hormone (GH) binding, forms homodimers and binds JAK2 via a box 1-containing domain. The soluble form (GHBP) is produced by phorbol ester-promoted proteolytic cleavage at the cell surface (shedding) by ADAM17/TACE. Shedding is inhibited by growth hormone (GH) binding to the receptor probably due to a conformational change in GHR rendering the receptor inaccessible to ADAM17. Post-translationally, on GH binding, phosphorylated on tyrosine residues in the cytoplasmic domain by JAK2. In terms of processing, ubiquitinated by the ECS(SOCS2) complex following ligand-binding and phosphorylation by JAK2, leading to its degradation by the proteasome. Regulation by the ECS(SOCS2) complex acts as a negative feedback loop of growth hormone receptor signaling. Ubiquitination is not sufficient for GHR internalization.

It localises to the cell membrane. The protein localises to the secreted. In terms of biological role, receptor for pituitary gland growth hormone (GH1) involved in regulating postnatal body growth. On ligand binding, couples to the JAK2/STAT5 pathway. Functionally, the soluble form (GHBP) acts as a reservoir of growth hormone in plasma and may be a modulator/inhibitor of GH signaling. The protein is Growth hormone receptor (GHR) of Macaca mulatta (Rhesus macaque).